We begin with the raw amino-acid sequence, 87 residues long: uncharacterized protein (87 aa).

This is an uncharacterized protein from Enterobacteria phage T4 (Bacteriophage T4).